Here is a 507-residue protein sequence, read N- to C-terminus: MPENRSYNDELNFLDKIDANTWRIKKGFVPNMKVDGFFYVNDLLEKLMFDELRQHSRAAGFGGFLPAMKQIANVAALPGIVQKSVGLPDVHAGYGFAIGNLAAFDMSNPEAVVSPGGVGFDINCGVRLLRTNLDERDVQPVKDELAQAMFDHIPVGVGSKGVIPMGARDLEEALEMGVDWSLREGYAWAEDKEHCEEYGRMLNADQSAVGSKAKKRGLPQLGTLGAGNHYAEIQVVDEIFDDYASQRMGIDHKGQVVVMIHSGSRGFGHQVATDALVAMEKAMKRDKVLTNDRQLACARIHSPEGQEYLKGMACAANFAWVNRSSMTFLSRQAFAKVFNTTPDDLDMQLIYDVSHNIAKMEEHISFQLSTTLLVHRKGSTRAFPPHHPLIPVDYQLSGQPVLIGGTMGTCSYVLTGTEKGMEQTFGTTCHGAGRAWSRAKSRRNLDYQEVLDRLAELGISIRVASPKLVMEEAPESYKNVTDVVNTCHAVGISKKAIKLRPIAVIKG.

Mn(2+) is bound by residues D121, C124, H229, H261, and H355. 228-232 serves as a coordination point for GMP; it reads NHYAE. GMP-binding positions include 355–356, 404–407, S411, 430–433, and K506; these read HN, GGTM, and HGAG. H430 acts as the GMP-histidine intermediate in catalysis.

It belongs to the RtcB family. Catalytic component of the tRNA-splicing ligase complex. Mn(2+) serves as cofactor.

The catalysed reaction is a 3'-end 3'-phospho-ribonucleotide-RNA + a 5'-end dephospho-ribonucleoside-RNA + GTP = a ribonucleotidyl-ribonucleotide-RNA + GMP + diphosphate. The enzyme catalyses a 3'-end 2',3'-cyclophospho-ribonucleotide-RNA + a 5'-end dephospho-ribonucleoside-RNA + GTP + H2O = a ribonucleotidyl-ribonucleotide-RNA + GMP + diphosphate + H(+). Catalytic subunit of the tRNA-splicing ligase complex that acts by directly joining spliced tRNA halves to mature-sized tRNAs by incorporating the precursor-derived splice junction phosphate into the mature tRNA as a canonical 3',5'-phosphodiester. May act as an RNA ligase with broad substrate specificity, and may function toward other RNAs. In Branchiostoma floridae (Florida lancelet), this protein is RNA-splicing ligase RtcB homolog.